We begin with the raw amino-acid sequence, 1465 residues long: DNA polymerase III PolC-type (1465 aa).

In terms of domain architecture, Exonuclease spans 431 to 583 (DVETTGLSAM…YDAEATGRLL (153 aa)).

This sequence belongs to the DNA polymerase type-C family. PolC subfamily.

Its subcellular location is the cytoplasm. The catalysed reaction is DNA(n) + a 2'-deoxyribonucleoside 5'-triphosphate = DNA(n+1) + diphosphate. Its function is as follows. Required for replicative DNA synthesis. This DNA polymerase also exhibits 3' to 5' exonuclease activity. The sequence is that of DNA polymerase III PolC-type from Streptococcus pyogenes.